The following is a 380-amino-acid chain: Apelin receptor (380 aa).

The Extracellular segment spans residues 1-30; that stretch reads MEEGGDFDNYYGADNQSECEYTDWKSSGAL. Asparagine 15 carries N-linked (GlcNAc...) asparagine glycosylation. Disulfide bonds link cysteine 19–cysteine 281 and cysteine 102–cysteine 181. Residues 31 to 54 form a helical membrane-spanning segment; that stretch reads IPAIYMLVFLLGTTGNGLVLWTVF. Residues 55–64 lie on the Cytoplasmic side of the membrane; sequence RSSREKRRSA. The chain crosses the membrane as a helical span at residues 65-86; sequence DIFIASLAVADLTFVVTLPLWA. Residues 87–99 are Extracellular-facing; it reads TYTYRDYDWPFGT. Residues 100–125 traverse the membrane as a helical segment; that stretch reads FSCKLSSYLIFVNMYASVFCLTGLSF. Residues 126–146 are Cytoplasmic-facing; it reads DRYLAIVRPVANARLRLRVSG. The helical transmembrane segment at 147-164 threads the bilayer; that stretch reads AVATAVLWVLAALLAMPV. Topologically, residues 165 to 198 are extracellular; it reads MVFRTTGDLENTTKVQCYMDYSMVATVSSDWAWE. The N-linked (GlcNAc...) asparagine glycan is linked to asparagine 175. The chain crosses the membrane as a helical span at residues 199 to 223; sequence VGLGVSSTTVGFVVPFTIMLTCYFF. Residues 224–246 lie on the Cytoplasmic side of the membrane; sequence IAQTIAGHFRKERIEGLRKRRRL. Residues 247–270 traverse the membrane as a helical segment; the sequence is LSIIVVLVVTFALCWMPYHLVKTL. Over 271–289 the chain is Extracellular; the sequence is YMLGSLLHWPCDFDLFLMN. Residues 290 to 312 traverse the membrane as a helical segment; sequence VFPYCTCISYVNSCLNPFLYAFF. Residues 313-380 lie on the Cytoplasmic side of the membrane; that stretch reads DPRFRQACTS…PYSQETLVVD (68 aa). The segment covering 342-351 has biased composition (low complexity); that stretch reads KSASYSSGHS. The tract at residues 342–380 is disordered; it reads KSASYSSGHSQGPGPNMGKGGEQMHEKSIPYSQETLVVD. Over residues 371–380 the composition is skewed to polar residues; the sequence is PYSQETLVVD.

It belongs to the G-protein coupled receptor 1 family. In terms of assembly, homodimer; dimerization inhibits APLNR-mediated G protein and beta-arrestin signaling pathways compared to monomeric APLNR.

The protein resides in the cell membrane. Its function is as follows. G protein-coupled receptor for peptide hormones apelin (APLN) and apelin receptor early endogenous ligand (APELA/ELA), that plays a role in the regulation of normal cardiovascular function and fluid homeostasis. When acting as apelin receptor, activates both G(i) protein pathway that inhibits adenylate cyclase activity, and the beta-arrestin pathway that promotes internalization of the receptor. APLNR/APJ also functions as mechanoreceptor that is activated by pathological stimuli in a G-protein-independent fashion to induce beta-arrestin signaling, hence eliciting cardiac hypertrophy. However, the presence of apelin ligand blunts cardiac hypertrophic induction from APLNR/APJ on response to pathological stimuli. Plays a key role in early development such as gastrulation, blood vessels formation and heart morphogenesis by acting as a APELA receptor. May promote angioblast migration toward the embryonic midline, i.e. the position of the future vessel formation, during vasculogenesis. Promotes sinus venosus (SV)-derived endothelial cells migration into the developing heart to promote coronary blood vessel development. Also plays a role in various processes in adults such as regulation of blood vessel formation, blood pressure, heart contractility and heart failure. (Microbial infection) Alternative coreceptor with CD4 for HIV-1 infection; may be involved in the development of AIDS dementia. This chain is Apelin receptor (APLNR), found in Macaca mulatta (Rhesus macaque).